We begin with the raw amino-acid sequence, 683 residues long: Transforming growth factor-beta-induced protein ig-h3 (683 aa).

A signal peptide spans 1–23; that stretch reads MALFVRLLALALALALGPAATLA. A Phosphoserine modification is found at Ser37. An EMI domain is found at 45 to 99; sequence GPNVCAVQKVIGTNRKYFTNCKQWYQRKICGKSTVISYECCPGYEKVPGERSCPA. 5 cysteine pairs are disulfide-bonded: Cys49–Cys85, Cys74–Cys339, Cys84–Cys97, Cys214–Cys317, and Cys473–Cys478. Position 65 is an S-cysteinyl cysteine (Cys65). 4 consecutive FAS1 domains span residues 103–236, 240–371, 375–498, and 502–632; these read LANL…DKVI, TNNI…DELL, SAKT…DRML, and SGTV…TSVL. A Cell attachment site motif is present at residues 642 to 644; that stretch reads RGD.

Binds to type I, II, and IV collagens. Post-translationally, gamma-carboxylation is controversial. Gamma-carboxyglutamated; gamma-carboxyglutamate residues are formed by vitamin K dependent carboxylation; this may be required for calcium binding. According to a more recent report, does not contain vitamin K-dependent gamma-carboxyglutamate residues. The EMI domain contains 2 expected intradomain disulfide bridges (Cys-49-Cys85 and Cys-84-Cys-97) and one unusual interdomain disulfide bridge to the second FAS1 domain (Cys-74-Cys-339). This arrangement violates the predicted disulfide bridge pattern of an EMI domain. In terms of tissue distribution, located primarily in the epithelium of normal adult cornea, in fetal stromal cells, and both endothelium- and stroma-derived cells in healing corneal wounds. Not expressed in normal adult endothelium and stroma.

It is found in the secreted. The protein localises to the extracellular space. It localises to the extracellular matrix. Its function is as follows. Plays a role in cell adhesion. May play a role in cell-collagen interactions. The protein is Transforming growth factor-beta-induced protein ig-h3 (TGFBI) of Oryctolagus cuniculus (Rabbit).